The primary structure comprises 512 residues: ADP,ATP carrier protein 4 (512 aa).

Helical transmembrane passes span 34-54 (ISKF…QNLI), 71-91 (ISFL…VMYV), 102-122 (IFYL…YVIF), 157-177 (FSLF…LLFW), 192-212 (FYPL…HFLE), 231-251 (FHTL…IVSI), 296-316 (LIAT…GPWK), 330-350 (AAFI…FVLL), 361-381 (FTSA…FFAF), 390-410 (LIIA…IGAI), 448-468 (VIGT…IFII), and 476-496 (SISI…IWAT).

The protein belongs to the ADP/ATP translocase tlc family.

The protein localises to the cell membrane. Its function is as follows. Provides the rickettsial cell with host ATP in exchange for rickettsial ADP. This is an obligate exchange system. This energy acquiring activity is an important component of rickettsial parasitism. The polypeptide is ADP,ATP carrier protein 4 (tlcD) (Rickettsia typhi (strain ATCC VR-144 / Wilmington)).